The following is a 455-amino-acid chain: UDP-N-acetylmuramoylalanine--D-glutamate ligase (455 aa).

118 to 124 (GTNGKST) contributes to the ATP binding site.

The protein belongs to the MurCDEF family.

The protein resides in the cytoplasm. It carries out the reaction UDP-N-acetyl-alpha-D-muramoyl-L-alanine + D-glutamate + ATP = UDP-N-acetyl-alpha-D-muramoyl-L-alanyl-D-glutamate + ADP + phosphate + H(+). The protein operates within cell wall biogenesis; peptidoglycan biosynthesis. Cell wall formation. Catalyzes the addition of glutamate to the nucleotide precursor UDP-N-acetylmuramoyl-L-alanine (UMA). This Myxococcus xanthus (strain DK1622) protein is UDP-N-acetylmuramoylalanine--D-glutamate ligase.